A 155-amino-acid chain; its full sequence is Putative pre-16S rRNA nuclease (155 aa).

This sequence belongs to the YqgF nuclease family.

The protein localises to the cytoplasm. In terms of biological role, could be a nuclease involved in processing of the 5'-end of pre-16S rRNA. This chain is Putative pre-16S rRNA nuclease, found in Wolbachia sp. subsp. Brugia malayi (strain TRS).